The following is a 419-amino-acid chain: MRKTNMWFLERLRGSGENGASRGEAGDKSSKGPLYSNVLTPDKIPDFFIPPKLPSGPTEAEGQADLGPSTSEQNLASPGPRRAPRSPRLPAKLASESRSLLKAATRHVIQIESAEDWTAEEATNADPQAQGAMSLPSVPKAQTSYGFATLAESPHTRRKESLFHSEHGALAQVGSPGAGRRRAGAKGNGGDGGSREVGGALMSPSRYFSGGESDTGSSAESSPFGSPLLSRSVSLLKGFAQDSQAKVSQLKQSVGRHGSLSADDSTPDTSPGVRRRLSRRATPEPGPESGQAPRGEHTVKMGTRGSVRLLAEYEAAQARLRVRLLAAEGLYDRPCDARSINCCVGLCLVPGKLQKQRSTIIKNSRHPIFNEDFFFDGLGPASVRKLALRIKVVNKGSSLKRDTLLGEEELPLTSLLPFL.

Disordered stretches follow at residues 1–96 (MRKT…LASE), 115–136 (EDWT…MSLP), 151–225 (AESP…SPFG), and 247–300 (VSQL…HTVK). Positions 75 to 94 (LASPGPRRAPRSPRLPAKLA) are enriched in low complexity. Residues 186 to 196 (KGNGGDGGSRE) show a composition bias toward gly residues. Positions 212 to 225 (ESDTGSSAESSPFG) are enriched in polar residues. Residues S259, S261, and S270 each carry the phosphoserine modification. In terms of domain architecture, C2 spans 303–419 (TRGSVRLLAE…LPLTSLLPFL (117 aa)).

It belongs to the C2CD4 family.

This Mus musculus (Mouse) protein is C2 calcium-dependent domain-containing protein 4C (C2cd4c).